A 247-amino-acid polypeptide reads, in one-letter code: Adenosylcobinamide-GDP ribazoletransferase (247 aa).

The next 5 membrane-spanning stretches (helical) occupy residues 34–54 (IITF…VFMV), 59–79 (CGAP…TGGF), 113–133 (GGLA…ELAL), 138–158 (ILAS…LLMY), and 194–214 (VLLP…AIFI).

This sequence belongs to the CobS family. Mg(2+) serves as cofactor.

The protein resides in the cell inner membrane. The catalysed reaction is alpha-ribazole + adenosylcob(III)inamide-GDP = adenosylcob(III)alamin + GMP + H(+). It catalyses the reaction alpha-ribazole 5'-phosphate + adenosylcob(III)inamide-GDP = adenosylcob(III)alamin 5'-phosphate + GMP + H(+). It functions in the pathway cofactor biosynthesis; adenosylcobalamin biosynthesis; adenosylcobalamin from cob(II)yrinate a,c-diamide: step 7/7. In terms of biological role, joins adenosylcobinamide-GDP and alpha-ribazole to generate adenosylcobalamin (Ado-cobalamin). Also synthesizes adenosylcobalamin 5'-phosphate from adenosylcobinamide-GDP and alpha-ribazole 5'-phosphate. The protein is Adenosylcobinamide-GDP ribazoletransferase of Escherichia coli O81 (strain ED1a).